The primary structure comprises 1005 residues: Espin-like protein (1005 aa).

ANK repeat units follow at residues 1 to 31 (MEKQ…GPGI), 35 to 64 (LGAG…LPGN), 69 to 99 (NGAT…GLQD), 103 to 132 (SGVS…SATL), 136 to 166 (EGAR…SVNR), 170 to 200 (SGAS…DVHL), 204 to 234 (DGMS…GLTA), 238 to 267 (EGAT…PILR), and 270 to 299 (WGGT…DPSL). Disordered regions lie at residues 333–444 (LMTP…ERGQ) and 462–483 (LGAE…TEQA). Residues 334–346 (MTPPPPPFPPPPL) show a composition bias toward pro residues. The segment covering 468–480 (AEAQDNGGSSGPT) has biased composition (polar residues). A coiled-coil region spans residues 517-541 (LQLRRRCQEYESELGRLAAELQALL). Disordered regions lie at residues 616–644 (GDEK…AQRQ), 695–730 (RSGL…AAAG), and 773–795 (LRGQ…PRLG).

As to quaternary structure, interacts with MYO3A (via C-terminus). Interacts with MYO3B (via C-terminus).

It localises to the cell projection. It is found in the stereocilium. Functionally, binds to but does not cross-link actin. Required for the formation and maintenance of inner ear hair cell stereocilia and staircase formation. Essential for normal hearing. This chain is Espin-like protein (ESPNL), found in Homo sapiens (Human).